The primary structure comprises 56 residues: UPF0434 protein ECH_0194 (56 aa).

The protein belongs to the UPF0434 family.

This Ehrlichia chaffeensis (strain ATCC CRL-10679 / Arkansas) protein is UPF0434 protein ECH_0194.